We begin with the raw amino-acid sequence, 398 residues long: Elongation factor Tu (398 aa).

The region spanning 10-207 is the tr-type G domain; that stretch reads KPHVNIGTIG…TVDDYIPDPE (198 aa). The tract at residues 19–26 is G1; sequence GHVDHGKT. A GTP-binding site is contributed by 19–26; it reads GHVDHGKT. T26 contacts Mg(2+). Residues 63-67 form a G2 region; that stretch reads GITIN. Residues 84–87 are G3; that stretch reads DAPG. GTP contacts are provided by residues 84–88 and 139–142; these read DAPGH and NKVD. The interval 139-142 is G4; the sequence is NKVD. Positions 177–179 are G5; that stretch reads SAL.

It belongs to the TRAFAC class translation factor GTPase superfamily. Classic translation factor GTPase family. EF-Tu/EF-1A subfamily. In terms of assembly, monomer.

The protein localises to the cytoplasm. The enzyme catalyses GTP + H2O = GDP + phosphate + H(+). In terms of biological role, GTP hydrolase that promotes the GTP-dependent binding of aminoacyl-tRNA to the A-site of ribosomes during protein biosynthesis. The polypeptide is Elongation factor Tu (Streptococcus mutans serotype c (strain ATCC 700610 / UA159)).